The primary structure comprises 423 residues: Maintenance of mitochondrial morphology protein 1 (423 aa).

At M1–G20 the chain is on the lumenal side. The chain crosses the membrane as a helical span at residues L21–F41. At G42 to T423 the chain is on the cytoplasmic side. The SMP-LTD domain occupies Q115–P327. Disordered regions lie at residues R332 to E372 and S387 to T423. Over residues R355–E372 the composition is skewed to basic and acidic residues.

The protein belongs to the MMM1 family. Homodimer. Component of the ER-mitochondria encounter structure (ERMES) or MDM complex, composed of MMM1, MDM10, MDM12 and MDM34. An MMM1 homodimer associates with one molecule of MDM12 on each side in a pairwise head-to-tail manner, and the SMP-LTD domains of MMM1 and MDM12 generate a continuous hydrophobic tunnel for phospholipid trafficking.

Its subcellular location is the endoplasmic reticulum membrane. Its function is as follows. Component of the ERMES/MDM complex, which serves as a molecular tether to connect the endoplasmic reticulum (ER) and mitochondria. Components of this complex are involved in the control of mitochondrial shape and protein biogenesis, and function in nonvesicular lipid trafficking between the ER and mitochondria. The MDM12-MMM1 subcomplex functions in the major beta-barrel assembly pathway that is responsible for biogenesis of all outer membrane beta-barrel proteins, and acts in a late step after the SAM complex. The MDM10-MDM12-MMM1 subcomplex further acts in the TOM40-specific pathway after the action of the MDM12-MMM1 complex. Essential for establishing and maintaining the structure of mitochondria and maintenance of mtDNA nucleoids. The polypeptide is Maintenance of mitochondrial morphology protein 1 (Botryotinia fuckeliana (strain B05.10) (Noble rot fungus)).